Here is a 203-residue protein sequence, read N- to C-terminus: Signal peptidase I (203 aa).

The interval 1 to 26 (MSSESDSPTPQTPPAQPAASQPKADS) is disordered. The Cytoplasmic segment spans residues 1-33 (MSSESDSPTPQTPPAQPAASQPKADSPLMEGIK). Low complexity predominate over residues 17–26 (PAASQPKADS). Residues 34–50 (TIGLSVVLALGIRTFVA) form a helical membrane-spanning segment. At 51-203 (EARYIPSESM…LGELGPPPSY (153 aa)) the chain is on the extracellular side. Catalysis depends on residues serine 59 and lysine 109.

It belongs to the peptidase S26 family.

The protein resides in the cell membrane. The catalysed reaction is Cleavage of hydrophobic, N-terminal signal or leader sequences from secreted and periplasmic proteins.. The sequence is that of Signal peptidase I (lepB) from Leptolyngbya laminosa (Phormidium laminosum).